The chain runs to 250 residues: Cell division protein ZapD (250 aa).

This sequence belongs to the ZapD family. Interacts with FtsZ.

The protein resides in the cytoplasm. Cell division factor that enhances FtsZ-ring assembly. Directly interacts with FtsZ and promotes bundling of FtsZ protofilaments, with a reduction in FtsZ GTPase activity. The polypeptide is Cell division protein ZapD (Yersinia pseudotuberculosis serotype O:1b (strain IP 31758)).